We begin with the raw amino-acid sequence, 257 residues long: Acetylglutamate kinase (257 aa).

Substrate is bound by residues 41 to 42 (GG), Arg-63, and Asn-156.

Belongs to the acetylglutamate kinase family. ArgB subfamily.

The protein localises to the cytoplasm. The enzyme catalyses N-acetyl-L-glutamate + ATP = N-acetyl-L-glutamyl 5-phosphate + ADP. Its pathway is amino-acid biosynthesis; L-arginine biosynthesis; N(2)-acetyl-L-ornithine from L-glutamate: step 2/4. Catalyzes the ATP-dependent phosphorylation of N-acetyl-L-glutamate. This Geobacillus sp. (strain WCH70) protein is Acetylglutamate kinase.